Here is a 323-residue protein sequence, read N- to C-terminus: Mycothiol acetyltransferase (323 aa).

N-acetyltransferase domains lie at 5 to 145 and 168 to 323; these read LTTD…LPLR and VEIR…PEER. Residue Glu-36 coordinates 1D-myo-inositol 2-(L-cysteinylamino)-2-deoxy-alpha-D-glucopyranoside. Position 83-85 (83-85) interacts with acetyl-CoA; that stretch reads VAV. 3 residues coordinate 1D-myo-inositol 2-(L-cysteinylamino)-2-deoxy-alpha-D-glucopyranoside: Glu-195, Lys-236, and Glu-252. Acetyl-CoA contacts are provided by residues 256-258 and 263-269; these read VGV and QGSGLGR. Tyr-290 provides a ligand contact to 1D-myo-inositol 2-(L-cysteinylamino)-2-deoxy-alpha-D-glucopyranoside. 295 to 300 is an acetyl-CoA binding site; it reads NRPAVQ.

Belongs to the acetyltransferase family. MshD subfamily. In terms of assembly, monomer.

The catalysed reaction is 1D-myo-inositol 2-(L-cysteinylamino)-2-deoxy-alpha-D-glucopyranoside + acetyl-CoA = mycothiol + CoA + H(+). Functionally, catalyzes the transfer of acetyl from acetyl-CoA to desacetylmycothiol (Cys-GlcN-Ins) to form mycothiol. This Thermobifida fusca (strain YX) protein is Mycothiol acetyltransferase.